The sequence spans 283 residues: Polyamine aminopropyltransferase (283 aa).

Residues 2 to 237 form the PABS domain; that stretch reads ELWYTEEHTD…GHWLFGFASK (236 aa). Q31 lines the S-methyl-5'-thioadenosine pocket. Spermidine is bound by residues H62 and D86. S-methyl-5'-thioadenosine contacts are provided by residues E106 and 137 to 138; that span reads DG. D155 serves as the catalytic Proton acceptor. 155–158 lines the spermidine pocket; it reads DSTD. P162 lines the S-methyl-5'-thioadenosine pocket.

The protein belongs to the spermidine/spermine synthase family. In terms of assembly, homodimer or homotetramer.

The protein localises to the cytoplasm. The enzyme catalyses S-adenosyl 3-(methylsulfanyl)propylamine + putrescine = S-methyl-5'-thioadenosine + spermidine + H(+). It participates in amine and polyamine biosynthesis; spermidine biosynthesis; spermidine from putrescine: step 1/1. In terms of biological role, catalyzes the irreversible transfer of a propylamine group from the amino donor S-adenosylmethioninamine (decarboxy-AdoMet) to putrescine (1,4-diaminobutane) to yield spermidine. This is Polyamine aminopropyltransferase from Clostridium perfringens (strain ATCC 13124 / DSM 756 / JCM 1290 / NCIMB 6125 / NCTC 8237 / Type A).